The following is a 156-amino-acid chain: Protein-export protein SecB (156 aa).

This sequence belongs to the SecB family. As to quaternary structure, homotetramer, a dimer of dimers. One homotetramer interacts with 1 SecA dimer.

It localises to the cytoplasm. In terms of biological role, one of the proteins required for the normal export of preproteins out of the cell cytoplasm. It is a molecular chaperone that binds to a subset of precursor proteins, maintaining them in a translocation-competent state. It also specifically binds to its receptor SecA. In Aliivibrio fischeri (strain ATCC 700601 / ES114) (Vibrio fischeri), this protein is Protein-export protein SecB.